The sequence spans 254 residues: Small ribosomal subunit protein uS3 (254 aa).

The KH type-2 domain maps to 39–109 (IRNYISARLK…EVKIDVIEVI (71 aa)). A disordered region spans residues 220-254 (EEMKKMQERRNDSRGRGRGDGRGAKRRRRPAAKKA). Residues 221–242 (EMKKMQERRNDSRGRGRGDGRG) are compositionally biased toward basic and acidic residues. Basic residues predominate over residues 243–254 (AKRRRRPAAKKA).

This sequence belongs to the universal ribosomal protein uS3 family. Part of the 30S ribosomal subunit. Forms a tight complex with proteins S10 and S14.

Binds the lower part of the 30S subunit head. Binds mRNA in the 70S ribosome, positioning it for translation. This Chlorobaculum parvum (strain DSM 263 / NCIMB 8327) (Chlorobium vibrioforme subsp. thiosulfatophilum) protein is Small ribosomal subunit protein uS3.